A 119-amino-acid polypeptide reads, in one-letter code: Large ribosomal subunit protein uL24 (119 aa).

The protein belongs to the universal ribosomal protein uL24 family. Part of the 50S ribosomal subunit.

One of two assembly initiator proteins, it binds directly to the 5'-end of the 23S rRNA, where it nucleates assembly of the 50S subunit. Functionally, located at the polypeptide exit tunnel on the outside of the subunit. This chain is Large ribosomal subunit protein uL24, found in Methanococcus maripaludis (strain DSM 14266 / JCM 13030 / NBRC 101832 / S2 / LL).